A 408-amino-acid chain; its full sequence is Multidrug resistance protein MdtG (408 aa).

Helical transmembrane passes span 16–36 (LIVAWLGCFLTGAAFSLVMPF), 58–78 (IVFSITFLFSAIASPFWGGLA), 92–112 (LGMGIVMVLMGLAQNIWQFLI), 115–135 (ALLGLLGGFVPNANALIATQV), 146–166 (TLSTGGVSGALLGPMAGGLLA), 173–193 (PVFFITASVLILCFFVTLFCI), 221–241 (ILSLFVTTLIIQVATGSIAPI), 256–276 (VAFISGMIASVPGVAALLSAP), 290–310 (ILITALIFSVLLLIPMSYVQT), and 378–398 (AVFLVTAGVVLFNAVYSWNSL).

Belongs to the major facilitator superfamily. DHA1 family. MdtG (TC 2.A.1.2.20) subfamily.

The protein localises to the cell inner membrane. In terms of biological role, confers resistance to fosfomycin and deoxycholate. The sequence is that of Multidrug resistance protein MdtG from Escherichia coli (strain SMS-3-5 / SECEC).